Consider the following 234-residue polypeptide: MSNQLIYTGKAKDIYTTEDEHVIKSVYKDQATMLNGARKETIVGKGVLNNKISSLIFEKLNEAGVATHFIKKLSDTEQLNKKVDIIPLEVVLRNVTAGSFAKRFGIVEGILLDTPIVEFYYKKDELDDPFINDEHVLFLKIADEKQIAYIKEETLRINQLLKGWFQQIDLQLIDFKLEFGFDKDGNIILADEFSPDNCRLWDKDGNHMDKDVFRRDLGNLTAVYQIVLEKLEQL.

Belongs to the SAICAR synthetase family.

The catalysed reaction is 5-amino-1-(5-phospho-D-ribosyl)imidazole-4-carboxylate + L-aspartate + ATP = (2S)-2-[5-amino-1-(5-phospho-beta-D-ribosyl)imidazole-4-carboxamido]succinate + ADP + phosphate + 2 H(+). It participates in purine metabolism; IMP biosynthesis via de novo pathway; 5-amino-1-(5-phospho-D-ribosyl)imidazole-4-carboxamide from 5-amino-1-(5-phospho-D-ribosyl)imidazole-4-carboxylate: step 1/2. This chain is Phosphoribosylaminoimidazole-succinocarboxamide synthase, found in Streptococcus uberis (strain ATCC BAA-854 / 0140J).